The chain runs to 836 residues: MWLLALCLVGLAGAQRGGGGPGGGAPGGPGLGLGSLGEERFPVVNTAYGRVRGVRRELNNEILGPVVQFLGVPYATPPLGARRFQPPEAPASWPGVRNATTLPPACPQNLHGALPAIMLPVWFTDNLEAAATYVQNQSEDCLYLNLYVPTEDGPLTKKRDEATLNPPDTDIRDSGKKPVMLFLHGGSYMEGTGNMFDGSVLAAYGNVIVATLNYRLGVLGFLSTGDQAAKGNYGLLDQIQALRWLSENIAHFGGDPERITIFGSGAGASCVNLLILSHHSEGLFQKAIAQSGTAISSWSVNYQPLKYTRLLAAKVGCDREDSTEAVECLRRKSSRELVDQDVQPARYHIAFGPVVDGDVVPDDPEILMQQGEFLNYDMLIGVNQGEGLKFVEDSAESEDGVSASAFDFTVSNFVDNLYGYPEGKDVLRETIKFMYTDWADRDNGEMRRKTLLALFTDHQWVAPAVATAKLHADYQSPVYFYTFYHHCQAEGRPEWADAAHGDELPYVFGVPMVGATDLFPCNFSKNDVMLSAVVMTYWTNFAKTGDPNQPVPQDTKFIHTKPNRFEEVVWSKFNSKEKQYLHIGLKPRVRDNYRANKVAFWLELVPHLHNLHTELFTTTTRLPPYATRWPPRTPGPGTSGTRRPPPPATLPPESDIDLGPRAYDRFPGDSRDYSTELSVTVAVGASLLFLNILAFAALYYKRDRRQELRCRRLSPPGGSGSGVPGGGPLLPTAGRELPPEEELVSLQLKRGGGVGADPAEALRPACPPDYTLALRRAPDDVPLLAPGALTLLPSGLGPPPPPPPPSLHPFGPFPPPPPTATSHNNTLPHPHSTTRV.

An N-terminal signal peptide occupies residues 1 to 14; it reads MWLLALCLVGLAGA. At 15–678 the chain is on the extracellular side; the sequence is QRGGGGPGGG…DSRDYSTELS (664 aa). N-linked (GlcNAc...) asparagine glycosylation is found at Asn98 and Asn136. 3 cysteine pairs are disulfide-bonded: Cys106/Cys141, Cys317/Cys328, and Cys487/Cys521. Asn522 carries an N-linked (GlcNAc...) asparagine glycan. Residues 623-661 form a disordered region; sequence PPYATRWPPRTPGPGTSGTRRPPPPATLPPESDIDLGPR. The chain crosses the membrane as a helical span at residues 679–699; sequence VTVAVGASLLFLNILAFAALY. Positions 679–699 are required for interaction with LHFPL4; sequence VTVAVGASLLFLNILAFAALY. Residues 700–836 are Cytoplasmic-facing; the sequence is YKRDRRQELR…LPHPHSTTRV (137 aa). Disordered stretches follow at residues 711-735 and 791-836; these read RRLSPPGGSGSGVPGGGPLLPTAGR and LLPS…TTRV. Phosphoserine occurs at positions 714 and 719. The segment covering 717-728 has biased composition (gly residues); it reads GGSGSGVPGGGP. A compositionally biased stretch (pro residues) spans 796–819; that stretch reads LGPPPPPPPPSLHPFGPFPPPPPT. Polar residues predominate over residues 824 to 836; sequence NNTLPHPHSTTRV.

The protein belongs to the type-B carboxylesterase/lipase family. As to quaternary structure, interacts with neurexins NRXN1, NRXN2 and NRXN3. Interaction with neurexins is mediated by heparan sulfate glycan modification on neurexin. Interacts (via its C-terminus) with DLG4/PSD-95 (via PDZ domain 3). Interacts with PATJ. Interacts with GPHN. Interacts with MDGA1 and MDGA2. Found in a complex with MAGI2 and IGSF9B, where it interacts with MAGI2 (via WW 1, WW 2 and PDZ 2 domains). Identified in a complex of 720 kDa composed of LHFPL4, NLGN2, GABRA1, GABRB2, GABRG2 and GABRB3. Interacts with LHFPL4; leading to mutual regulation of the protein level and synaptic clustering. Interacts with GABRA1. Detected on hippocampus neurons, especially at inhibitory synapses. Detected in retina, in the outer and inner plexiform layer. Detected in pancreas, in islet of Langerhans beta cells (at protein level). Expressed in brain, spinal cord and dorsal root ganglion. Detected in brain, and at lower levels in pancreas islet beta cells.

Its subcellular location is the cell membrane. It localises to the postsynaptic cell membrane. The protein resides in the presynaptic cell membrane. Transmembrane scaffolding protein involved in cell-cell interactions via its interactions with neurexin family members. Mediates cell-cell interactions both in neurons and in other types of cells, such as Langerhans beta cells. Plays a role in synapse function and synaptic signal transmission, especially via gamma-aminobutyric acid receptors (GABA(A) receptors). Functions by recruiting and clustering synaptic proteins. Promotes clustering of postsynaptic GABRG2 and GPHN. Promotes clustering of postsynaptic LHFPL4. Modulates signaling by inhibitory synapses, and thereby plays a role in controlling the ratio of signaling by excitatory and inhibitory synapses and information processing. Required for normal signal amplitude from inhibitory synapses, but is not essential for normal signal frequency. May promote the initial formation of synapses, but is not essential for this. In vitro, triggers the de novo formation of presynaptic structures. Mediates cell-cell interactions between Langerhans beta cells and modulates insulin secretion. This is Neuroligin-2 (Nlgn2) from Rattus norvegicus (Rat).